A 150-amino-acid chain; its full sequence is Putative HTH-type transcriptional regulator HI_0379 (150 aa).

The HTH rrf2-type domain maps to 2–131 (KLTSKGRYAV…NEITLAELVN (130 aa)).

The protein is Putative HTH-type transcriptional regulator HI_0379 of Haemophilus influenzae (strain ATCC 51907 / DSM 11121 / KW20 / Rd).